The following is a 91-amino-acid chain: DNA/RNA-binding protein Alba (91 aa).

An N6-acetyllysine modification is found at Lys11.

The protein belongs to the histone-like Alba family. Post-translationally, acetylated. Acetylation at Lys-11 decreases DNA-binding affinity.

The protein resides in the cytoplasm. It localises to the chromosome. Its function is as follows. Binds double-stranded DNA tightly but without sequence specificity. Incubation with DNA in vitro gives fibrous structures 10.3 +/- 1.1 nm in thickness (naked DNA is 1.83 +/- 0.37 nm). This protein does not significantly compact DNA. This Thermococcus kodakarensis (strain ATCC BAA-918 / JCM 12380 / KOD1) (Pyrococcus kodakaraensis (strain KOD1)) protein is DNA/RNA-binding protein Alba.